Here is a 485-residue protein sequence, read N- to C-terminus: Glutamyl-tRNA(Gln) amidotransferase subunit A (485 aa).

Active-site charge relay system residues include K74 and S149. Catalysis depends on S173, which acts as the Acyl-ester intermediate.

It belongs to the amidase family. GatA subfamily. In terms of assembly, heterotrimer of A, B and C subunits.

The catalysed reaction is L-glutamyl-tRNA(Gln) + L-glutamine + ATP + H2O = L-glutaminyl-tRNA(Gln) + L-glutamate + ADP + phosphate + H(+). In terms of biological role, allows the formation of correctly charged Gln-tRNA(Gln) through the transamidation of misacylated Glu-tRNA(Gln) in organisms which lack glutaminyl-tRNA synthetase. The reaction takes place in the presence of glutamine and ATP through an activated gamma-phospho-Glu-tRNA(Gln). This Herminiimonas arsenicoxydans protein is Glutamyl-tRNA(Gln) amidotransferase subunit A.